Consider the following 303-residue polypeptide: Nucleotide-binding protein SAR0820 (303 aa).

Residue 18-25 (GLSGAGKS) participates in ATP binding. Position 69–72 (69–72 (DLRG)) interacts with GTP.

It belongs to the RapZ-like family.

In terms of biological role, displays ATPase and GTPase activities. This is Nucleotide-binding protein SAR0820 from Staphylococcus aureus (strain MRSA252).